A 358-amino-acid polypeptide reads, in one-letter code: MASQVSAVDDILSEYHGLEQQMADPELHNDAAAARRVGKRYSELQPIINVHRDLVSAQEDLEAAREMAHEDHEFQAEAERLEVEVVELEEKLADLLAPRDPHDGEDIVMEIKAGAGGEEAALFAGDLLRMYQKFADKHGFVVEVLDSAESDLGGVKDITLSIRSRQPSRDGAWSQFKFEGGVHRVQRVPVTESQGRIQTSAAGVLVYPEPDEVENVEIDEKDIRVDVYRSSGKGGQGVNTTDSAVRITHLPTGLVVTCQKERSQIQNRARAMQVLAARLQAMKEEEAAAEAATGRAAQIRTMDRSERIRTYNWPENRISDHRIGFKANNLDSVLDGELDDLFTALQAAERAERLEAEG.

Gln-236 bears the N5-methylglutamine mark.

It belongs to the prokaryotic/mitochondrial release factor family. Post-translationally, methylated by PrmC. Methylation increases the termination efficiency of RF1.

It is found in the cytoplasm. Peptide chain release factor 1 directs the termination of translation in response to the peptide chain termination codons UAG and UAA. The polypeptide is Peptide chain release factor 1 (Corynebacterium glutamicum (strain ATCC 13032 / DSM 20300 / JCM 1318 / BCRC 11384 / CCUG 27702 / LMG 3730 / NBRC 12168 / NCIMB 10025 / NRRL B-2784 / 534)).